The following is a 431-amino-acid chain: Venom metalloproteinase 1 (431 aa).

Positions 1-22 are cleaved as a signal peptide; it reads MDLFILTRFILFLSFFMKSIHC. N-linked (GlcNAc...) asparagine glycans are attached at residues N64, N113, N148, and N187. The Peptidase M12B domain maps to 228 to 428; the sequence is DLLMKTSRRL…TSAACLKDTY (201 aa). 2 disulfide bridges follow: C340–C423 and C379–C407. Zn(2+) is bound at residue H363. The active site involves E364. Residues H367 and H373 each contribute to the Zn(2+) site. A glycan (N-linked (GlcNAc...) asparagine) is linked at N414.

It in the C-terminal section; belongs to the venom metalloproteinase (M12B) family. Monomer. The cofactor is Zn(2+). As to expression, expressed by the venom gland.

The protein localises to the secreted. The gelatinase activity is inhibited by EDTA. Functionally, the recombinant protein has gelatinase activity. In vivo, injection of this recombinant into fifth instar L.oleracea (host) larvae results in partial insect mortality associated with the molt to sixth instar, with surviving insects showing retarded development and growth. The protein is Venom metalloproteinase 1 of Eulophus pennicornis (Parasitoid wasp).